Reading from the N-terminus, the 263-residue chain is 3-methyl-2-oxobutanoate hydroxymethyltransferase (263 aa).

Mg(2+) is bound by residues Asp-45 and Asp-84. 3-methyl-2-oxobutanoate-binding positions include 45 to 46 (DS), Asp-84, and Lys-112. Mg(2+) is bound at residue Glu-114. The Proton acceptor role is filled by Glu-180.

It belongs to the PanB family. Homodecamer; pentamer of dimers. Mg(2+) is required as a cofactor.

It is found in the cytoplasm. The catalysed reaction is 3-methyl-2-oxobutanoate + (6R)-5,10-methylene-5,6,7,8-tetrahydrofolate + H2O = 2-dehydropantoate + (6S)-5,6,7,8-tetrahydrofolate. The protein operates within cofactor biosynthesis; (R)-pantothenate biosynthesis; (R)-pantoate from 3-methyl-2-oxobutanoate: step 1/2. In terms of biological role, catalyzes the reversible reaction in which hydroxymethyl group from 5,10-methylenetetrahydrofolate is transferred onto alpha-ketoisovalerate to form ketopantoate. In Salmonella enteritidis PT4 (strain P125109), this protein is 3-methyl-2-oxobutanoate hydroxymethyltransferase.